The sequence spans 676 residues: Cysteine-rich receptor-like protein kinase 8 (676 aa).

A signal peptide spans 1–34; that stretch reads MYIVSMFGLAGLEALICFIFLFLFSFLTSFKASA. The Extracellular segment spans residues 35 to 291; that stretch reads QNPFYLNHDC…IPGKSGNSTV (257 aa). Gnk2-homologous domains lie at 38–142 and 151–255; these read FYLN…HKNF and ELIM…LYAF. Residues Asn46, Asn53, Asn71, Asn114, Asn159, Asn187, Asn257, and Asn288 are each glycosylated (N-linked (GlcNAc...) asparagine). The helical transmembrane segment at 292-312 threads the bilayer; that stretch reads LVVAIVVLAVLLFIALVGYCF. Topologically, residues 313 to 676 are cytoplasmic; that stretch reads LAQRTKKTFD…DELITDLYPR (364 aa). Positions 353 to 639 constitute a Protein kinase domain; it reads FAESNKIGRG…TLPVPRQPGF (287 aa). ATP-binding positions include 359-367 and Lys381; that span reads IGRGGFGEV. Residue Tyr426 is modified to Phosphotyrosine. Asp478 serves as the catalytic Proton acceptor. At Ser482 the chain carries Phosphoserine. Phosphothreonine is present on Thr518. The residue at position 526 (Tyr526) is a Phosphotyrosine. Positions 640–666 are disordered; it reads FIQSSPVKDPTDSDQSTTTKSTPASID. Residues 652 to 662 show a composition bias toward low complexity; sequence SDQSTTTKSTP.

Belongs to the protein kinase superfamily. Ser/Thr protein kinase family. CRK subfamily.

It is found in the membrane. The catalysed reaction is L-seryl-[protein] + ATP = O-phospho-L-seryl-[protein] + ADP + H(+). It carries out the reaction L-threonyl-[protein] + ATP = O-phospho-L-threonyl-[protein] + ADP + H(+). This Arabidopsis thaliana (Mouse-ear cress) protein is Cysteine-rich receptor-like protein kinase 8 (CRK8).